Reading from the N-terminus, the 377-residue chain is tRNA/tmRNA (uracil-C(5))-methyltransferase (377 aa).

Glutamine 199, tyrosine 227, asparagine 232, glutamate 248, and aspartate 308 together coordinate S-adenosyl-L-methionine. Residue cysteine 333 is the Nucleophile of the active site. The active-site Proton acceptor is glutamate 367.

It belongs to the class I-like SAM-binding methyltransferase superfamily. RNA M5U methyltransferase family. TrmA subfamily.

The enzyme catalyses uridine(54) in tRNA + S-adenosyl-L-methionine = 5-methyluridine(54) in tRNA + S-adenosyl-L-homocysteine + H(+). It carries out the reaction uridine(341) in tmRNA + S-adenosyl-L-methionine = 5-methyluridine(341) in tmRNA + S-adenosyl-L-homocysteine + H(+). Its function is as follows. Dual-specificity methyltransferase that catalyzes the formation of 5-methyluridine at position 54 (m5U54) in all tRNAs, and that of position 341 (m5U341) in tmRNA (transfer-mRNA). In Aeromonas hydrophila subsp. hydrophila (strain ATCC 7966 / DSM 30187 / BCRC 13018 / CCUG 14551 / JCM 1027 / KCTC 2358 / NCIMB 9240 / NCTC 8049), this protein is tRNA/tmRNA (uracil-C(5))-methyltransferase.